We begin with the raw amino-acid sequence, 508 residues long: UBX domain-containing protein 4 (508 aa).

The tract at residues 1–200 is interaction with UBQLN1; it reads MLWFQGAIPA…PTEDLTVRVE (200 aa). At 1–413 the chain is on the cytoplasmic side; sequence MLWFQGAIPA…VHSSSGDFWT (413 aa). Positions 117–199 are disordered; that stretch reads GEASLANGSQ…RPTEDLTVRV (83 aa). Over residues 122–190 the composition is skewed to polar residues; the sequence is ANGSQSEGSV…QEPSGCSNQR (69 aa). A UBX domain is found at 315–393; that stretch reads ERSTVARIQF…ELAPSASVVL (79 aa). Residues 414 to 434 lie within the membrane without spanning it; the sequence is LLGTVLYPFLAIWRLISNFLF. Over 435–508 the chain is Cytoplasmic; it reads SNPPPAQTSV…TWNGNSTQQM (74 aa). Residues 450 to 459 show a composition bias toward polar residues; sequence ETSNLASSSN. Positions 450 to 508 are disordered; the sequence is ETSNLASSSNSEKREPVRKRVLEKRGEDFKKEGKIYRLRTQDDGEDENNTWNGNSTQQM. A compositionally biased stretch (basic and acidic residues) spans 460–491; the sequence is SEKREPVRKRVLEKRGEDFKKEGKIYRLRTQD. Position 489 is a phosphothreonine (threonine 489). Positions 498–508 are enriched in polar residues; it reads NTWNGNSTQQM.

In terms of assembly, directly interacts with VCP. Interacts with UBQLN1. Forms a complex with VCP and UBQLN1.

It is found in the endoplasmic reticulum membrane. It localises to the nucleus envelope. In terms of biological role, involved in endoplasmic reticulum-associated protein degradation (ERAD). Acts as a platform to recruit both UBQLN1 and VCP to the ER during ERAD. The polypeptide is UBX domain-containing protein 4 (UBXN4) (Bos taurus (Bovine)).